The sequence spans 882 residues: MAKSNEESSNLNVMNKPPLKKTKTLPSLNLRVSVTPPNPNDNNGIGGTSTTKTDFSEQQWNYPSFLGIGSTSRKRRQPPPPPSKPPVNLIPPHPRPLSVNDHNKTTSSLLPQPSSSSITKQQQQHSTSSPIFYLLVICCIILVPYSAYLQYKLAKLKDMKLQLCGQIDFCSRNGKTSIQEEVDDDDNADSRTIALYIVLFTLILPFVLYKYLDYLPQIINFLRRTESNKEDVPLKKRVAYMVDVFFSIYPYAKLLALLCATLFLIAFGGLALYAVTGGSMAEALWHSWTYVADAGNHAETEGTGQRIVSVSISAGGMLIFAMMLGLVSDAISEKVDSLRKGKSEVIERNHVLILGWSDKLGSLLKQLAIANKSVGGGVIVVLAEKEKEEMEMDIAKLEFDFMGTSVICRSGSPLILADLKKVSVSKARAIIVLAADENADQSDARALRVVLSLAGVKEGLRGHVVVEMSDLDNEPLVKLVGGELIETVVAHDVIGRLMIQCALQPGLAQIWEDILGFENAEFYIKRWPELDDLLFKDILISFPDAIPCGVKVAADGGKIVINPDDNYVLRDGDEVLVIAEDDDTYAPGPLPEVRKGYFPRIRDPPKYPEKILFCGWRRDIDDMIMVLEAFLAPGSELWMFNEVPEKERERKLAAGELDVFGLENIKLVHREGNAVIRRHLESLPLETFDSILILADESVEDSVAHSDSRSLATLLLIRDIQSRRLPYRDTKSTSLRLSGFSHNSWIREMQQASDKSIIISEILDSRTRNLVSVSRISDYVLSNELVSMALAMVAEDKQINRVLEELFAEEGNEMCIKPAEFYLFDQEELCFYDIMIRGRTRKEIVIGYRLANQERAIINPSEKSVPRKWSLDDVFVVLASGE.

Positions 1-122 (MAKSNEESSN…PSSSSITKQQ (122 aa)) are disordered. A compositionally biased stretch (polar residues) spans 48 to 62 (TSTTKTDFSEQQWNY). The segment covering 78 to 95 (PPPPPSKPPVNLIPPHPR) has biased composition (pro residues). A compositionally biased stretch (low complexity) spans 107-117 (SSLLPQPSSSS). 4 helical membrane-spanning segments follow: residues 129-149 (SPIF…SAYL), 192-212 (TIAL…YKYL), 255-275 (LALL…LYAV), and 307-327 (IVSV…LGLV). 2 RCK N-terminal domains span residues 348 to 489 (RNHV…ETVV) and 608 to 757 (PEKI…DKSI). The stretch at 378–403 (VIVVLAEKEKEEMEMDIAKLEFDFMG) forms a coiled coil.

It belongs to the castor/pollux (TC 1.A.1.23) family. Interacts (via c-terminus) with CNGC15A, CNGC15B and CNGC15C (via N-terminus). The Nod factor has no effect on these interactions, implying that the complex is maintained after activation. As to expression, mainly expressed in roots and nodules. Also detected in pods, flowers, leaves, and stems.

It is found in the nucleus membrane. In terms of biological role, required for early signal transduction events leading to endosymbiosis. Acts early in a signal transduction chain leading from the perception of Nod factor to the activation of calcium spiking. Also involved in mycorrhizal symbiosis. May be involved in the regulation of the calcium channel responsible for calcium spiking by mobilizing another cation, and thereby altering the membrane potential. The protein is Ion channel DMI1 of Medicago truncatula (Barrel medic).